The primary structure comprises 210 residues: THAP domain-containing protein 1 (210 aa).

The THAP-type zinc-finger motif lies at Cys5 to His57. The HCFC1-binding motif (HBM) motif lies at Asp131 to Tyr134. The stretch at Glu137–Lys187 forms a coiled coil.

Belongs to the THAP1 family. In terms of assembly, interacts with PAWR. Component of a THAP1/THAP3-HCFC1-OGT complex that contains, either THAP1 or THAP3, HCFC1 and OGT. Interacts with OGT. Interacts (via the HBM) with HCFC1 (via the Kelch-repeat domain); the interaction recruits HCFC1 to the RRM1 promoter. As to expression, highest levels in heart, liver and kidney. Lower levels in brain and lung.

It localises to the nucleus. It is found in the nucleoplasm. The protein localises to the PML body. DNA-binding transcription regulator that regulates endothelial cell proliferation and G1/S cell-cycle progression. Specifically binds the 5'-[AT]NTNN[GT]GGCA[AGT]-3' core DNA sequence and acts by modulating expression of pRB-E2F cell-cycle target genes, including RRM1. Component of a THAP1/THAP3-HCFC1-OGT complex that is required for the regulation of the transcriptional activity of RRM1. May also have pro-apoptotic activity by potentiating both serum-withdrawal and TNF-induced apoptosis. The sequence is that of THAP domain-containing protein 1 (Thap1) from Mus musculus (Mouse).